A 150-amino-acid polypeptide reads, in one-letter code: Deoxyuridine 5'-triphosphate nucleotidohydrolase (150 aa).

Residues 69 to 71 (RSG), Asn82, and 86 to 88 (LID) contribute to the substrate site.

It belongs to the dUTPase family. Requires Mg(2+) as cofactor.

The enzyme catalyses dUTP + H2O = dUMP + diphosphate + H(+). Its pathway is pyrimidine metabolism; dUMP biosynthesis; dUMP from dCTP (dUTP route): step 2/2. Functionally, this enzyme is involved in nucleotide metabolism: it produces dUMP, the immediate precursor of thymidine nucleotides and it decreases the intracellular concentration of dUTP so that uracil cannot be incorporated into DNA. The protein is Deoxyuridine 5'-triphosphate nucleotidohydrolase of Methylobacillus flagellatus (strain ATCC 51484 / DSM 6875 / VKM B-1610 / KT).